The primary structure comprises 201 residues: Glycerol-3-phosphate acyltransferase (201 aa).

5 consecutive transmembrane segments (helical) span residues 10 to 30 (MLIG…GLIL), 60 to 80 (LAAA…LIAA), 86 to 106 (AAIA…WIGF), 116 to 136 (LGVL…AWIV), and 166 to 186 (ALAA…RANI).

This sequence belongs to the PlsY family. Probably interacts with PlsX.

The protein resides in the cell inner membrane. It carries out the reaction an acyl phosphate + sn-glycerol 3-phosphate = a 1-acyl-sn-glycero-3-phosphate + phosphate. Its pathway is lipid metabolism; phospholipid metabolism. In terms of biological role, catalyzes the transfer of an acyl group from acyl-phosphate (acyl-PO(4)) to glycerol-3-phosphate (G3P) to form lysophosphatidic acid (LPA). This enzyme utilizes acyl-phosphate as fatty acyl donor, but not acyl-CoA or acyl-ACP. In Brucella canis (strain ATCC 23365 / NCTC 10854 / RM-666), this protein is Glycerol-3-phosphate acyltransferase.